The sequence spans 261 residues: Indole-3-glycerol phosphate synthase (261 aa).

This sequence belongs to the TrpC family.

The catalysed reaction is 1-(2-carboxyphenylamino)-1-deoxy-D-ribulose 5-phosphate + H(+) = (1S,2R)-1-C-(indol-3-yl)glycerol 3-phosphate + CO2 + H2O. Its pathway is amino-acid biosynthesis; L-tryptophan biosynthesis; L-tryptophan from chorismate: step 4/5. This chain is Indole-3-glycerol phosphate synthase, found in Paraburkholderia phytofirmans (strain DSM 17436 / LMG 22146 / PsJN) (Burkholderia phytofirmans).